A 272-amino-acid chain; its full sequence is Bis(5'-nucleosyl)-tetraphosphatase, symmetrical (272 aa).

It belongs to the Ap4A hydrolase family.

It catalyses the reaction P(1),P(4)-bis(5'-adenosyl) tetraphosphate + H2O = 2 ADP + 2 H(+). Its function is as follows. Hydrolyzes diadenosine 5',5'''-P1,P4-tetraphosphate to yield ADP. The protein is Bis(5'-nucleosyl)-tetraphosphatase, symmetrical of Ectopseudomonas mendocina (strain ymp) (Pseudomonas mendocina).